The sequence spans 981 residues: Proline-rich transmembrane protein 3 (981 aa).

Residues 1–27 (MASSPWGCVCGLLLLLLPLLGTGPALG) form the signal peptide. The Extracellular portion of the chain corresponds to 28-474 (RGFPRPLENS…RVLSFSWELH (447 aa)). 2 disordered regions span residues 43 to 107 (PGAH…GAQR) and 169 to 457 (PPSL…TAPP). A compositionally biased stretch (basic and acidic residues) spans 65 to 85 (PRADSHRNSDVRHAPAEEMPE). Positions 297 to 302 (SWEVSS) are O-glycosylated at one site. An O-linked (GalNAc...) serine glycan is attached at Ser329. Over residues 331 to 340 (APDRPSKPER) the composition is skewed to basic and acidic residues. O-linked (GalNAc...) threonine glycosylation is present at Thr363. Asn379 carries an N-linked (GlcNAc...) asparagine glycan. Residues 411-427 (APSTSRRGLIRVTTQRA) are compositionally biased toward polar residues. Positions 437–457 (TASSMASAPASSPPANATAPP) are enriched in low complexity. A helical transmembrane segment spans residues 475 to 495 (VYGVGVLFLLPALLALAALAA). Over 496–501 (APAGPR) the chain is Cytoplasmic. Residues 502-522 (LALVAAVLVLVASALRSAYML) traverse the membrane as a helical segment. The Extracellular portion of the chain corresponds to 523–542 (TDPYGSQARLGVRGGLVLYN). The chain crosses the membrane as a helical span at residues 543-563 (LPFPLLLTALAALTLLGLGAG). Topologically, residues 564 to 570 (LPPPLQN) are cytoplasmic. A helical membrane pass occupies residues 571 to 591 (PLLLGAVALVHGVGLLATDLL). The Extracellular segment spans residues 592–598 (STWSVLN). A helical transmembrane segment spans residues 599–619 (LLTQGLSCAWGAAVALGTLCL). Topologically, residues 620–638 (CRRRLLDGPRGWDASPGPR) are cytoplasmic. The chain crosses the membrane as a helical span at residues 639–659 (LLAVAGALGLLASGLQLAAAL). Residues 660–679 (WLYPGPGRVGRFSWAWWGVH) are Extracellular-facing. A helical membrane pass occupies residues 680 to 700 (FWLRLLELTWALALALAAVAA). Over 701–981 (ARPRPPTEHA…RSASSDTIEL (281 aa)) the chain is Cytoplasmic. The segment at 759-807 (AESGQLATPSSGAWGSAASLGRGPQGGPGLSRNGVGPAPSLSELDLRPP) is disordered. Low complexity predominate over residues 765–780 (ATPSSGAWGSAASLGR). Ser777 is modified (phosphoserine). Position 780 is an omega-N-methylarginine (Arg780). Phosphoserine is present on residues Ser789, Ser798, Ser808, Ser815, Ser854, Ser874, Ser902, Ser903, and Ser911. Residues 836–865 (LRGLASPPPGGALRPRRGSHPKAELDDAGS) are disordered. The tract at residues 937-981 (TVQLLPAPTPAPDSTAARQGDGQGEVQPRGKPGESRSASSDTIEL) is disordered. Over residues 972 to 981 (RSASSDTIEL) the composition is skewed to polar residues.

It is found in the membrane. The sequence is that of Proline-rich transmembrane protein 3 (PRRT3) from Homo sapiens (Human).